Consider the following 20-residue polypeptide: Haemoporin (20 aa).

Positions Ala-1–Phe-20 are disordered.

In terms of assembly, homopentamer. Forms a cylindrical structure with a central pore. Detected in the hemolymph.

It localises to the secreted. The sequence is that of Haemoporin from Aplysia californica (California sea hare).